The primary structure comprises 527 residues: F-box-like/WD repeat-containing protein TBL1X (527 aa).

Ser-2 bears the N-acetylserine mark. A LisH domain is found at Thr-4–Gln-36. The F-box-like domain occupies Gly-41–Ala-86. An N6-acetyllysine modification is found at Lys-102. The disordered stretch occupies residues Thr-127 to Ile-164. WD repeat units lie at residues Gly-180 to Ser-219, Pro-236 to Leu-275, Gln-277 to Gln-316, Phe-319 to Gln-359, Gly-360 to Asp-399, Ala-402 to Thr-450, Lys-453 to Ser-492, and Arg-494 to Arg-526. A Glycyl lysine isopeptide (Lys-Gly) (interchain with G-Cter in SUMO2) cross-link involves residue Lys-290.

This sequence belongs to the WD repeat EBI family. As to quaternary structure, homotetramer; dimer of dimers. Component of the N-Cor repressor complex, at least composed of NCOR1, NCOR2, HDAC3, TBL1X, TBL1R, CORO2A and GPS2. Component of a E3 ubiquitin ligase complex containing UBE2D1, SIAH1, CACYBP/SIP, SKP1, APC and TBL1X. Interacts with GPS2 (when sumoylated); leading to protect GPS2 against degradation by the proteasome. Probably part of other corepressor complexes, that do not contain NCOR1 and NCOR2. Interacts with histones H2B, H3a and H4. Interacts with MECP2; recruits TBL1X to the heterochromatin foci. Interacts with USP44. Expressed in the cochlea.

It is found in the nucleus. Its function is as follows. F-box-like protein involved in the recruitment of the ubiquitin/19S proteasome complex to nuclear receptor-regulated transcription units. Plays an essential role in transcription activation mediated by nuclear receptors. Probably acts as integral component of corepressor complexes that mediates the recruitment of the 19S proteasome complex, leading to the subsequent proteasomal degradation of transcription repressor complexes, thereby allowing cofactor exchange. In Mus musculus (Mouse), this protein is F-box-like/WD repeat-containing protein TBL1X (Tbl1x).